The primary structure comprises 703 residues: Leucine zipper putative tumor suppressor 3 (703 aa).

Disordered stretches follow at residues 1–22 (MAPA…PHLF), 40–190 (RADP…SEPL), and 204–347 (FHSM…PPSP). A compositionally biased stretch (low complexity) spans 96–107 (GSFPGPRSSGSG). Residues 109–124 (NRERPGPGRYPSEDKV) are compositionally biased toward basic and acidic residues. A compositionally biased stretch (polar residues) spans 205–218 (HSMQNLCPPQTNGT). The segment covering 251 to 268 (DSGRNSLTSLPTYSSSYS) has biased composition (low complexity). A compositionally biased stretch (gly residues) spans 290 to 299 (SSGGGGGGSG). Residues 304-324 (GTSDSGRASSKSGSSSSMGRS) are compositionally biased toward low complexity. The span at 325–336 (GHLGSGEGGNGG) shows a compositional bias: gly residues. Residues S346 and S348 each carry the phosphoserine modification. Coiled coils occupy residues 348-526 (SALI…SLRD) and 600-669 (TRAL…RLRE). The interval 665-703 (RRLRERGAAGGSRTPTPQHGEEEKAWTPSRLERIESTEI) is disordered. The span at 683–703 (HGEEEKAWTPSRLERIESTEI) shows a compositional bias: basic and acidic residues.

Belongs to the LZTS3 family. Interacts (via C-terminus) with SHANK3 (via PDZ domain). Interacts (via coiled coil) with SIPA1L1. Can form homooligomers. In terms of tissue distribution, detected in brain, with highest expression in brain cortex, caudate putamen, cerebellum and hippocampus. Detected in neuropil (at protein level). Detected in brain and kidney.

It localises to the synapse. The protein resides in the postsynaptic density. It is found in the cell projection. The protein localises to the dendritic spine. Its subcellular location is the dendrite. It localises to the cytoplasm. The protein resides in the cytoskeleton. Functionally, may be involved in promoting the maturation of dendritic spines, probably via regulating SIPA1L1 levels at the postsynaptic density of synapses. This is Leucine zipper putative tumor suppressor 3 from Rattus norvegicus (Rat).